A 252-amino-acid chain; its full sequence is UPF0246 protein LJ_0535 (252 aa).

Belongs to the UPF0246 family.

The polypeptide is UPF0246 protein LJ_0535 (Lactobacillus johnsonii (strain CNCM I-12250 / La1 / NCC 533)).